An 80-amino-acid polypeptide reads, in one-letter code: Biotin synthase auxiliary protein (80 aa).

The protein belongs to the BsaP family. Iron-sulfur cluster is required as a cofactor.

Its function is as follows. Required for the activity of the biotin synthase BioB. The sequence is that of Biotin synthase auxiliary protein from Mycobacterium leprae (strain TN).